We begin with the raw amino-acid sequence, 384 residues long: Cyclin-J (384 aa).

The Cyclin N-terminal domain maps to 15-143 (DIHQTLRYKE…LLETFEWNLC (129 aa)).

Belongs to the cyclin family. Cyclin J subfamily.

The sequence is that of Cyclin-J (ccnj) from Xenopus laevis (African clawed frog).